The chain runs to 71 residues: MIRSLPTMTVLIPLVSLAGLLYSASVEEGFPEGCTSASSLCFYSLLLPVTVPVYVFFHLWTWMGLKLFRHN.

Residues 1-5 (MIRSL) lie on the Cytoplasmic side of the membrane. Residues 6-26 (PTMTVLIPLVSLAGLLYSASV) traverse the membrane as a helical segment. Residues 27–44 (EEGFPEGCTSASSLCFYS) are Lumenal-facing. The helical transmembrane segment at 45-65 (LLLPVTVPVYVFFHLWTWMGL) threads the bilayer. Topologically, residues 66-71 (KLFRHN) are cytoplasmic.

As to quaternary structure, component of the glycosylphosphatidylinositol-N-acetylglucosaminyltransferase (GPI-GnT) complex composed at least by PIGA, PIGC, PIGH, PIGP, PIGQ, PIGY and DPM2. Interacts directly with PIGA; this interaction regulates glycosylphosphatidylinositol-N-acetylglucosaminyltransferase activity. Does not interact with Ras proteins.

Its subcellular location is the endoplasmic reticulum membrane. Its pathway is glycolipid biosynthesis; glycosylphosphatidylinositol-anchor biosynthesis. Part of the glycosylphosphatidylinositol-N-acetylglucosaminyltransferase (GPI-GnT) complex that catalyzes the transfer of N-acetylglucosamine from UDP-N-acetylglucosamine to phosphatidylinositol and participates in the first step of GPI biosynthesis. May act by regulating the catalytic subunit PIGA. This chain is Phosphatidylinositol N-acetylglucosaminyltransferase subunit Y, found in Mus musculus (Mouse).